The primary structure comprises 180 residues: Acireductone dioxygenase (180 aa).

Fe(2+)-binding residues include H96, H98, E102, and H140. The Ni(2+) site is built by H96, H98, E102, and H140.

This sequence belongs to the acireductone dioxygenase (ARD) family. Monomer. The cofactor is Fe(2+). It depends on Ni(2+) as a cofactor.

The enzyme catalyses 1,2-dihydroxy-5-(methylsulfanyl)pent-1-en-3-one + O2 = 3-(methylsulfanyl)propanoate + CO + formate + 2 H(+). It carries out the reaction 1,2-dihydroxy-5-(methylsulfanyl)pent-1-en-3-one + O2 = 4-methylsulfanyl-2-oxobutanoate + formate + 2 H(+). The protein operates within amino-acid biosynthesis; L-methionine biosynthesis via salvage pathway; L-methionine from S-methyl-5-thio-alpha-D-ribose 1-phosphate: step 5/6. Functionally, catalyzes 2 different reactions between oxygen and the acireductone 1,2-dihydroxy-3-keto-5-methylthiopentene (DHK-MTPene) depending upon the metal bound in the active site. Fe-containing acireductone dioxygenase (Fe-ARD) produces formate and 2-keto-4-methylthiobutyrate (KMTB), the alpha-ketoacid precursor of methionine in the methionine recycle pathway. Ni-containing acireductone dioxygenase (Ni-ARD) produces methylthiopropionate, carbon monoxide and formate, and does not lie on the methionine recycle pathway. The chain is Acireductone dioxygenase from Synechococcus sp. (strain WH7803).